Consider the following 144-residue polypeptide: MAEIFESVDKNKDGKILWDEFAEAIRVFSPQITSEEIDKMFIVLDVDGDGQIDDVEFASCLMVNGGGEKDTEEEVVMKEAFDLYDMDGDGKISASEIHVVLKRLGEKHTMEDCVVMVQTVDKDSDGFVNFEEFKIMMNSNKESH.

EF-hand domains are found at residues 1 to 31, 32 to 67, 72 to 107, and 108 to 143; these read MAEI…FSPQ, ITSE…NGGG, EEEV…LGEK, and HTME…NKES. Ca(2+) is bound by residues aspartate 45, aspartate 47, aspartate 49, glutamine 51, glutamate 56, aspartate 85, aspartate 87, aspartate 89, lysine 91, glutamate 96, aspartate 121, aspartate 123, aspartate 125, and glutamate 132.

Its function is as follows. Potential calcium sensor. The chain is Probable calcium-binding protein CML31 (CML31) from Arabidopsis thaliana (Mouse-ear cress).